The chain runs to 129 residues: uncharacterized protein (129 aa).

The N-terminal stretch at 1–27 (MLMRKKKLLSRISFGSLFLLCGTILSA) is a signal peptide. The N-palmitoyl cysteine moiety is linked to residue Cys28. Residue Cys28 is the site of S-diacylglycerol cysteine attachment.

The protein belongs to the MG439/MG440 family.

It is found in the cell membrane. This is an uncharacterized protein from Mycoplasma pneumoniae (strain ATCC 29342 / M129 / Subtype 1) (Mycoplasmoides pneumoniae).